Reading from the N-terminus, the 71-residue chain is MKDNIHPTVYKATMNCACGYQAEVLSTKGENVHVEICSNCHPFYTGKQRLIDTAGRIDRFRKKYAKFGEEK.

Residues cysteine 16, cysteine 18, cysteine 37, and cysteine 40 each coordinate Zn(2+).

This sequence belongs to the bacterial ribosomal protein bL31 family. Type A subfamily. In terms of assembly, part of the 50S ribosomal subunit. Zn(2+) serves as cofactor.

In terms of biological role, binds the 23S rRNA. This is Large ribosomal subunit protein bL31 from Nitratidesulfovibrio vulgaris (strain ATCC 29579 / DSM 644 / CCUG 34227 / NCIMB 8303 / VKM B-1760 / Hildenborough) (Desulfovibrio vulgaris).